A 266-amino-acid chain; its full sequence is Undecaprenyl-diphosphatase (266 aa).

The next 8 helical transmembrane spans lie at 1–21 (MTLF…FLPI), 39–59 (QGLA…MIYF), 87–107 (WYVI…KGWI), 113–133 (TALV…YADA), 143–163 (GLTL…LIPG), 187–207 (FSFL…TLDL), 218–238 (ALLY…YLFL), and 244–264 (IGML…LWFV).

It belongs to the UppP family.

It is found in the cell inner membrane. The catalysed reaction is di-trans,octa-cis-undecaprenyl diphosphate + H2O = di-trans,octa-cis-undecaprenyl phosphate + phosphate + H(+). In terms of biological role, catalyzes the dephosphorylation of undecaprenyl diphosphate (UPP). Confers resistance to bacitracin. The polypeptide is Undecaprenyl-diphosphatase (Alteromonas mediterranea (strain DSM 17117 / CIP 110805 / LMG 28347 / Deep ecotype)).